Consider the following 304-residue polypeptide: Acetyl-coenzyme A carboxylase carboxyl transferase subunit beta (304 aa).

In terms of domain architecture, CoA carboxyltransferase N-terminal spans V23–V292. 4 residues coordinate Zn(2+): C27, C30, C46, and C49. The C4-type zinc finger occupies C27 to C49. Positions N284–A304 are disordered.

Belongs to the AccD/PCCB family. As to quaternary structure, acetyl-CoA carboxylase is a heterohexamer composed of biotin carboxyl carrier protein (AccB), biotin carboxylase (AccC) and two subunits each of ACCase subunit alpha (AccA) and ACCase subunit beta (AccD). Zn(2+) is required as a cofactor.

The protein resides in the cytoplasm. It carries out the reaction N(6)-carboxybiotinyl-L-lysyl-[protein] + acetyl-CoA = N(6)-biotinyl-L-lysyl-[protein] + malonyl-CoA. It participates in lipid metabolism; malonyl-CoA biosynthesis; malonyl-CoA from acetyl-CoA: step 1/1. Its function is as follows. Component of the acetyl coenzyme A carboxylase (ACC) complex. Biotin carboxylase (BC) catalyzes the carboxylation of biotin on its carrier protein (BCCP) and then the CO(2) group is transferred by the transcarboxylase to acetyl-CoA to form malonyl-CoA. The polypeptide is Acetyl-coenzyme A carboxylase carboxyl transferase subunit beta (Salmonella arizonae (strain ATCC BAA-731 / CDC346-86 / RSK2980)).